Consider the following 254-residue polypeptide: Nickel import ATP-binding protein NikD (254 aa).

The ABC transporter domain maps to Pro2–Val241. Residue Gly36–Ser43 participates in ATP binding.

This sequence belongs to the ABC transporter superfamily. Nickel importer (TC 3.A.1.5.3) family. As to quaternary structure, the complex is composed of two ATP-binding proteins (NikD and NikE), two transmembrane proteins (NikB and NikC) and a solute-binding protein (NikA).

Its subcellular location is the cell inner membrane. The enzyme catalyses Ni(2+)(out) + ATP + H2O = Ni(2+)(in) + ADP + phosphate + H(+). Its function is as follows. Part of the ABC transporter complex NikABCDE involved in nickel import. Responsible for energy coupling to the transport system. The sequence is that of Nickel import ATP-binding protein NikD from Shigella boydii serotype 4 (strain Sb227).